The sequence spans 577 residues: Protein O-linked-mannose beta-1,4-N-acetylglucosaminyltransferase 2 (577 aa).

Topologically, residues 1 to 4 (MNIA) are cytoplasmic. The chain crosses the membrane as a helical; Signal-anchor for type II membrane protein span at residues 5 to 25 (AVFNALLVSVLATVLWKYIKL). The Lumenal portion of the chain corresponds to 26-577 (REHAFMVEEE…PFADVLLCST (552 aa)). 4 N-linked (GlcNAc...) asparagine glycosylation sites follow: Asn98, Asn275, Asn335, and Asn540. Residues 481–577 (KVRDARCQAS…PFADVLLCST (97 aa)) form the Fibronectin type-III domain.

The protein belongs to the glycosyltransferase 61 family.

It is found in the endoplasmic reticulum membrane. The enzyme catalyses 3-O-(alpha-D-mannosyl)-L-threonyl-[protein] + UDP-N-acetyl-alpha-D-glucosamine = 3-O-(N-acetyl-beta-D-glucosaminyl-(1-&gt;4)-alpha-D-mannosyl)-L-threonyl-[protein] + UDP + H(+). It functions in the pathway protein modification; protein glycosylation. O-linked mannose beta-1,4-N-acetylglucosaminyltransferase that transfers UDP-N-acetyl-D-glucosamine to the 4-position of the mannose to generate N-acetyl-D-glucosamine-beta-1,4-O-D-mannosylprotein. Involved in the biosynthesis of the phosphorylated O-mannosyl trisaccharide (N-acetylgalactosamine-beta-3-N-acetylglucosamine-beta-4-(phosphate-6-)mannose), a carbohydrate structure present in alpha-dystroglycan (DAG1), which is required for binding laminin G-like domain-containing extracellular proteins with high affinity. This is Protein O-linked-mannose beta-1,4-N-acetylglucosaminyltransferase 2 (POMGNT2) from Gallus gallus (Chicken).